Here is a 259-residue protein sequence, read N- to C-terminus: Acyl-[acyl-carrier-protein]--UDP-N-acetylglucosamine O-acyltransferase (259 aa).

This sequence belongs to the transferase hexapeptide repeat family. LpxA subfamily. Homotrimer.

The protein localises to the cytoplasm. The enzyme catalyses a (3R)-hydroxyacyl-[ACP] + UDP-N-acetyl-alpha-D-glucosamine = a UDP-3-O-[(3R)-3-hydroxyacyl]-N-acetyl-alpha-D-glucosamine + holo-[ACP]. It participates in glycolipid biosynthesis; lipid IV(A) biosynthesis; lipid IV(A) from (3R)-3-hydroxytetradecanoyl-[acyl-carrier-protein] and UDP-N-acetyl-alpha-D-glucosamine: step 1/6. Involved in the biosynthesis of lipid A, a phosphorylated glycolipid that anchors the lipopolysaccharide to the outer membrane of the cell. This chain is Acyl-[acyl-carrier-protein]--UDP-N-acetylglucosamine O-acyltransferase, found in Nautilia profundicola (strain ATCC BAA-1463 / DSM 18972 / AmH).